An 876-amino-acid chain; its full sequence is Senescence-induced receptor-like serine/threonine-protein kinase (876 aa).

A signal peptide spans 1–24 (MAMLKSLSSILFTSFALLFFLVHA). Residues 25 to 517 (QDQSGFISID…SNTKKKNKNG (493 aa)) are Extracellular-facing. LRR repeat units lie at residues 415–438 (RVVSLNISFSELRGQIDPAFSNLT), 439–462 (SIRKLDLSGNTLTGEIPAFLANLP), and 463–483 (NLTELNVEGNKLTGIVPQRLH). The helical transmembrane segment at 518–538 (YIIPLVVVGIIVVLLTALALF) threads the bilayer. The Cytoplasmic segment spans residues 539 to 876 (RRFKKKQQRG…LDTEMVPRAR (338 aa)). Residues 574–847 (NNFERVIGKG…VVMELKQIVY (274 aa)) enclose the Protein kinase domain. Residues 580–588 (IGKGGFGKV) and K601 contribute to the ATP site. A Phosphotyrosine modification is found at Y646. D697 (proton acceptor) is an active-site residue. S731 bears the Phosphoserine mark. Phosphothreonine is present on T732. Y745 is subject to Phosphotyrosine.

It belongs to the protein kinase superfamily. Ser/Thr protein kinase family.

The protein localises to the membrane. Involved in innate immune response of plants. The sequence is that of Senescence-induced receptor-like serine/threonine-protein kinase (SIRK) from Arabidopsis thaliana (Mouse-ear cress).